The primary structure comprises 389 residues: Meiosis-specific protein MEI4 (389 aa).

The segment at 1-127 (MDIQPWYLKT…LSQHFVESTD (127 aa)) is interaction with REC114.

It belongs to the MEI4L family. Part of the MCD recombinosome complex, at least composed of IHO1, REC114 and MEI4. Forms a complex with REC114; the interaction is required for MEI4 stability. Interacts (via N-terminal domain) with REC114 (via C-terminal domain). Interacts with IHO1. As to expression, expressed in adult testis and brain and in embryonic ovary.

It localises to the chromosome. Functionally, required for DNA double-strand breaks (DSBs) formation in unsynapsed regions during meiotic recombination. Probably acts by forming a complex with IHO1 and REC114, which activates DSBs formation in unsynapsed regions, an essential step to ensure completion of synapsis. This Mus musculus (Mouse) protein is Meiosis-specific protein MEI4.